We begin with the raw amino-acid sequence, 109 residues long: Membrane-bound lysozyme inhibitor of C-type lysozyme (109 aa).

An N-terminal signal peptide occupies residues 1–17; that stretch reads MTMKKLLIIILPVLLSG. Cys-18 is lipidated: N-palmitoyl cysteine. Cys-18 is lipidated: S-diacylglycerol cysteine. A disulfide bridge connects residues Cys-37 and Cys-102.

Belongs to the MliC family. Type 1 subfamily. In terms of assembly, monomer.

It is found in the cell outer membrane. Functionally, specifically inhibits C-type lysozymes. This Escherichia coli (strain K12) protein is Membrane-bound lysozyme inhibitor of C-type lysozyme.